The sequence spans 314 residues: Putative S-adenosyl-L-methionine-dependent methyltransferase MAV_0301 (314 aa).

S-adenosyl-L-methionine is bound by residues D132 and D161–L162.

Belongs to the UPF0677 family.

In terms of biological role, exhibits S-adenosyl-L-methionine-dependent methyltransferase activity. The polypeptide is Putative S-adenosyl-L-methionine-dependent methyltransferase MAV_0301 (Mycobacterium avium (strain 104)).